A 409-amino-acid polypeptide reads, in one-letter code: Nucleoprotein (409 aa).

Disordered stretches follow at residues 1 to 84 (MASG…KGGR) and 121 to 194 (ADTK…DSGD). Residues 15-31 (PVIKLGGPKPPKVGSSG) show a composition bias toward low complexity. An RNA-binding region spans residues 29–160 (SSGNASWFQA…GNFRWDFIPL (132 aa)). The CoV N NTD domain occupies 31–156 (GNASWFQAIK…GGPDGNFRWD (126 aa)). The span at 70 to 84 (YWRRQARFKPGKGGR) shows a compositional bias: basic residues. A compositionally biased stretch (low complexity) spans 162–179 (RGRSGRSTAASSAAASRA). The segment covering 180-192 (PSREGSRGRRSDS) has biased composition (basic and acidic residues). Serine 190 and serine 192 each carry phosphoserine; by host. One can recognise a CoV N CTD domain in the interval 215–331 (TKAKADEMAH…QCVDGVGTRP (117 aa)). Residues 226–333 (RYCKRTIPPN…VDGVGTRPKD (108 aa)) are dimerization. Cystine bridges form between cysteine 281–cysteine 308 and cysteine 320–cysteine 323. The interval 327–396 (VGTRPKDDEP…QLEFYDEPKV (70 aa)) is disordered. The span at 358-367 (QRPKKEKKLK) shows a compositional bias: basic residues. A compositionally biased stretch (basic and acidic residues) spans 368-384 (KQDDEADKALTSDEERN). Threonine 378 carries the post-translational modification Phosphothreonine; by host. Serine 379 carries the post-translational modification Phosphoserine; by host.

The protein belongs to the gammacoronavirus nucleocapsid protein family. Homooligomer. Both monomeric and oligomeric forms interact with RNA. Interacts with protein M. Interacts with NSP3; this interaction serves to tether the genome to the newly translated replicase-transcriptase complex at a very early stage of infection. ADP-ribosylated. The ADP-ribosylation is retained in the virion during infection. Post-translationally, phosphorylated on serine and threonine residues.

It is found in the virion. The protein localises to the host endoplasmic reticulum-Golgi intermediate compartment. It localises to the host Golgi apparatus. Functionally, packages the positive strand viral genome RNA into a helical ribonucleocapsid (RNP) and plays a fundamental role during virion assembly through its interactions with the viral genome and membrane protein M. Plays an important role in enhancing the efficiency of subgenomic viral RNA transcription as well as viral replication. This Gallus gallus (Chicken) protein is Nucleoprotein.